We begin with the raw amino-acid sequence, 297 residues long: Nicotinate-nucleotide pyrophosphorylase [carboxylating] (297 aa).

The interval 8-12 is important for hexamer formation; the sequence is LLLPP. Residues arginine 102, 138-139, 160-161, lysine 171, glutamate 201, aspartate 222, 248-250, and glycine 270 each bind quinolinate; these read RK, HR, and SGG.

Belongs to the NadC/ModD family. In terms of assembly, hexamer formed by 3 homodimers.

The enzyme catalyses nicotinate beta-D-ribonucleotide + CO2 + diphosphate = quinolinate + 5-phospho-alpha-D-ribose 1-diphosphate + 2 H(+). Its pathway is cofactor biosynthesis; NAD(+) biosynthesis; nicotinate D-ribonucleotide from quinolinate: step 1/1. With respect to regulation, activity toward QA is slightly repressed by phosphoribosylpyrophosphate (PRPP) in both a competitive and a non-competitive manner. Competitively inhibited by phthalic acid (PHT). In terms of biological role, involved in the catabolism of quinolinic acid (QA). The chain is Nicotinate-nucleotide pyrophosphorylase [carboxylating] (QPRT) from Homo sapiens (Human).